The following is a 187-amino-acid chain: Corticoliberin (187 aa).

The N-terminal stretch at 1 to 19 (MRLRLLVSAGMLLVALSSC) is a signal peptide. Positions 20–144 (LPCRALLSRG…HQGALERERR (125 aa)) are excised as a propeptide. Disordered regions lie at residues 75-94 (AARLSPNSTPLTAGRGSRPS) and 114-146 (QRSLDSRAEPAERGAEDALGGHQGALERERRSE). Basic and acidic residues predominate over residues 117–129 (LDSRAEPAERGAE). Ile185 carries the post-translational modification Isoleucine amide.

This sequence belongs to the sauvagine/corticotropin-releasing factor/urotensin I family. Interacts (via C-terminus) with CRFR1 (via N-terminal extracellular domain). As to expression, expressed in parvocellular paraventricular nucleus of the hypothalamus and in medial accessory olivary nucleus.

The protein resides in the secreted. Hormone regulating the release of corticotropin from pituitary gland. Induces NLRP6 in intestinal epithelial cells, hence may influence gut microbiota profile. In Mus musculus (Mouse), this protein is Corticoliberin (Crh).